The primary structure comprises 306 residues: Ribosomal RNA small subunit methyltransferase H (306 aa).

S-adenosyl-L-methionine is bound by residues 33–35 (GGY), Asp-51, Phe-78, Asp-96, and Gln-103.

This sequence belongs to the methyltransferase superfamily. RsmH family.

It localises to the cytoplasm. It catalyses the reaction cytidine(1402) in 16S rRNA + S-adenosyl-L-methionine = N(4)-methylcytidine(1402) in 16S rRNA + S-adenosyl-L-homocysteine + H(+). Specifically methylates the N4 position of cytidine in position 1402 (C1402) of 16S rRNA. In Rickettsia felis (strain ATCC VR-1525 / URRWXCal2) (Rickettsia azadi), this protein is Ribosomal RNA small subunit methyltransferase H.